The following is a 455-amino-acid chain: Ribosome biogenesis protein NOP53 (455 aa).

The segment covering 1–15 (MAPTNLTKKPSQYKQ) has biased composition (polar residues). The disordered stretch occupies residues 1–25 (MAPTNLTKKPSQYKQSSRKGKKAWR). A compositionally biased stretch (basic residues) spans 16 to 25 (SSRKGKKAWR). Ser31 is subject to Phosphoserine. The segment at 264 to 333 (HLMETLDDNE…RNKAKRHEEK (70 aa)) is disordered. Residues 268 to 294 (TLDDNEEEESSSNEEEEEEEEENENEN) are compositionally biased toward acidic residues. Residues 314 to 328 (VKNKKKTKYQRNKAK) are compositionally biased toward basic residues.

This sequence belongs to the NOP53 family. In terms of assembly, interacts with CBF5, FPR3, FPR4, NOP2, PIH1, RRN3, RRP6 and PAP2. Interacts with pre-60S ribosomal particles.

The protein localises to the nucleus. The protein resides in the nucleolus. It localises to the nucleoplasm. Its function is as follows. Late-acting factor in the nuclear maturation of 60S ribosomal subunits, which is required for normal acquisition of export competence. Required for the export of the large subunit. Acts to stimulate the RNase activity of the exosome complex, and may recruit the exosome to 7S pre-rRNA for processing. Associates with numerous RNAs including the 27S and 7S pre-rRNAs and the box H/ACA snoRNA snR37. Also interacts (via N-terminal region) with the mature 25S rRNA and the mature 5.8S rRNA. In Saccharomyces cerevisiae (strain ATCC 204508 / S288c) (Baker's yeast), this protein is Ribosome biogenesis protein NOP53.